The sequence spans 822 residues: DNA-directed RNA polymerase subunit beta N-terminal section (822 aa).

The segment at 376-408 (ELTEGNPSSKSQTKNKTSASKKSKTLNVANTKG) is disordered. The span at 383–393 (SSKSQTKNKTS) shows a compositional bias: low complexity.

It belongs to the RNA polymerase beta chain family. In terms of assembly, in plastids the minimal PEP RNA polymerase catalytic core is composed of four subunits: alpha, beta, beta', and beta''. When a (nuclear-encoded) sigma factor is associated with the core the holoenzyme is formed, which can initiate transcription.

The protein resides in the plastid. It is found in the chloroplast. It catalyses the reaction RNA(n) + a ribonucleoside 5'-triphosphate = RNA(n+1) + diphosphate. In terms of biological role, DNA-dependent RNA polymerase catalyzes the transcription of DNA into RNA using the four ribonucleoside triphosphates as substrates. The chain is DNA-directed RNA polymerase subunit beta N-terminal section (rpoB1) from Chlamydomonas reinhardtii (Chlamydomonas smithii).